Consider the following 309-residue polypeptide: Probable manganese-dependent inorganic pyrophosphatase (309 aa).

Residues histidine 9, aspartate 13, aspartate 15, aspartate 75, histidine 97, and aspartate 149 each contribute to the Mn(2+) site.

The protein belongs to the PPase class C family. It depends on Mn(2+) as a cofactor.

The protein localises to the cytoplasm. The enzyme catalyses diphosphate + H2O = 2 phosphate + H(+). The polypeptide is Probable manganese-dependent inorganic pyrophosphatase (Staphylococcus epidermidis (strain ATCC 12228 / FDA PCI 1200)).